The chain runs to 953 residues: MDAFKEEIEIGSSVESLMELLDSQKVLFHSQIDQLQDVVVAQCKLTGVNPLAQEMAAGALSIKIGKRPRDLLNPKAVKYLQAVFAIKDAISKRESREISALFGITVAQVREFFVTQKTRVRKQVRLSREKVVMSNTHALQDDGVPENNNATNHVEPVPLNSIHPEACSISWGEGETVALIPPEDIPPDISDSDKYFVENIFSLLRKEETFSGQVKLMEWIMQIQDASVLIWFLSKGGVLILTTWLSQAASEEQTSVLLLILKVLCHLPLHKASPENMSAILQSVNGLRFYRISDISNRAKGLLSRWTKLFAKIQAMKKQNRNSSQIDSQSQLLLKQSIAEIMGDSSNPEDILSLSNGKSENVRRIESSQGPKLLLTSADDSTKKHMLGSNPSYNKERRKVQMVEQPGQKAAGKSPQTVRIGTSGRSRPMSADDIQKAKMRALYMQSKNSKKDPLPSAIGDSKIVAPEKPLALHSAKDSPPIQNNEAKTEDTPVLSTVQPVNGFSTIQPVNGPSAVQPVNGPLAVQPVNGPSALQPVNGPSAVIVPVQADEIKKPSTPPKSISSKVGVMMKMSSQTILKNCKRKQIDWHVPPGMELDELWRVAAGGNSKEADVQRNRNRRERETTYQSLQTIPLNPKEPWDREMDYDDSLTPEIPSQQPPEESLTEPQDSLDERRIAAGAATTSSSLSSPEPDLELLAALLKNPDLVYALTSGKPSNLAGQDMVKLLDVIKTGAPNSSSSSNKQVEERVEVSLPSPTPSTNPGMSGWGQEGIRNPFSRQNQVGTAVARSGTQLRVGSMQWHQTNEQSIPRHAPSAYSNSITLAHTEREQQQYMQPKLHHNLHFQQQQQQPISTTSYAVREPVGQMGTGTSSSWRSQQSQNSYYSHQENEIASASQVTSYQGNSQYMSSNPGYESWSPDNSPSRNQLNMRGQQQQASRKHDSSTHPYWNQNKRWR.

Residues 63–123 (KIGKRPRDLL…VTQKTRVRKQ (61 aa)) constitute a DNA-binding region (homeobox). Residues 404 to 430 (EQPGQKAAGKSPQTVRIGTSGRSRPMS) are disordered. The segment covering 414–425 (SPQTVRIGTSGR) has biased composition (polar residues). Repeat copies occupy residues 498-502 (QPVNG), 507-511 (QPVNG), 516-520 (QPVNG), 525-529 (QPVNG), and 534-538 (QPVNG). A 5 X 5 AA repeats of Q-P-V-N-G region spans residues 498–538 (QPVNGFSTIQPVNGPSAVQPVNGPLAVQPVNGPSALQPVNG). Disordered stretches follow at residues 606–668 (NSKE…EPQD), 733–763 (APNS…NPGM), and 861–953 (VGQM…KRWR). Over residues 608–623 (KEADVQRNRNRRERET) the composition is skewed to basic and acidic residues. Residues 651 to 661 (PEIPSQQPPEE) show a composition bias toward low complexity. Polar residues predominate over residues 733 to 742 (APNSSSSSNK). Low complexity predominate over residues 869 to 884 (SSSWRSQQSQNSYYSH). 2 stretches are compositionally biased toward polar residues: residues 888–934 (EIAS…QQQA) and 942–953 (THPYWNQNKRWR).

In terms of assembly, interacts with SUF4. As to expression, expressed in shoot apex, root apex, leaf primordia and floral buds.

The protein resides in the nucleus. Seems to play a role in the regulation of flowering time in the autonomous flowering pathway by repressing FLOWERING LOCUS C expression. The protein is Homeobox protein LUMINIDEPENDENS (LD) of Arabidopsis thaliana (Mouse-ear cress).